The sequence spans 824 residues: Leucine--tRNA ligase (824 aa).

Residues 42–52 carry the 'HIGH' region motif; it reads PYPSGKIHMGH. The 'KMSKS' region motif lies at 581 to 585; it reads KMSKS. Lys584 serves as a coordination point for ATP.

It belongs to the class-I aminoacyl-tRNA synthetase family.

Its subcellular location is the cytoplasm. It carries out the reaction tRNA(Leu) + L-leucine + ATP = L-leucyl-tRNA(Leu) + AMP + diphosphate. This is Leucine--tRNA ligase from Geobacter sp. (strain M21).